Reading from the N-terminus, the 2718-residue chain is Zinc finger protein 40 (2718 aa).

Disordered regions lie at residues 58–182 (HLKK…CISS), 210–256 (LSQK…AESQ), and 335–373 (GLTS…PMPI). Ser-141 is subject to Phosphoserine. Residues 142-158 (ELRRWRSEGADPAKFSD) show a composition bias toward basic and acidic residues. Composition is skewed to polar residues over residues 164–182 (DSSS…CISS) and 237–256 (KNSS…AESQ). The segment at 406–428 (YICEYCNRACAKPSVLLKHIRSH) adopts a C2H2-type 1 zinc-finger fold. Thr-429 carries the post-translational modification Phosphothreonine. The C2H2-type 2 zinc-finger motif lies at 434 to 456 (YPCVTCGFSFKTKSNLYKHKKSH). Residues Ser-476, Ser-479, Ser-492, Ser-495, Ser-571, and Ser-577 each carry the phosphoserine modification. Residues 484–511 (SIHSDVEDSGESEEEGATDERQHDLGAM) are disordered. The segment covering 490–500 (EDSGESEEEGA) has biased composition (acidic residues). Residues 574-727 (RTDSPKAMDP…TPSALPTGEK (154 aa)) are disordered. The span at 576 to 585 (DSPKAMDPKP) shows a compositional bias: basic and acidic residues. Residues 588–612 (SSAQKQKDLQVTNVQPLSANMSQGG) show a composition bias toward polar residues. Positions 617 to 626 (ETNENSHQKG) are enriched in basic and acidic residues. Composition is skewed to polar residues over residues 644 to 687 (AQLQ…QTVS) and 698 to 721 (STEQ…TPSA). Phosphoserine occurs at positions 670 and 681. The CCHC HIVEP-type zinc-finger motif lies at 956 to 986 (GTMFECETCRNRYRKLENFENHKKFYCSELH). A disordered region spans residues 1022–1062 (WEQTPQIRKRRKMKSVGDDEELQQNESGTSPKSSEGLQFQN). Phosphoserine occurs at positions 1036, 1051, 1091, 1158, 1161, and 1180. A compositionally biased stretch (polar residues) spans 1045–1062 (QNESGTSPKSSEGLQFQN). A disordered region spans residues 1138 to 1169 (HTNSLSRPNSFDKPEPFERASPVSFQELNRTG). The span at 1160–1169 (VSFQELNRTG) shows a compositional bias: polar residues. 2 stretches are compositionally biased toward basic and acidic residues: residues 1202–1219 (LRGE…ERHV) and 1246–1259 (DLEA…KSEK). Disordered regions lie at residues 1202–1282 (LRGE…PKKK), 1384–1414 (RSKS…SRVG), and 1523–1548 (SHQS…VLSG). Position 1268 is a phosphothreonine (Thr-1268). 2 stretches are compositionally biased toward low complexity: residues 1394–1406 (TPPQ…ELQP) and 1523–1536 (SHQS…VSTQ). Ser-1735, Ser-1740, Ser-1749, and Ser-1753 each carry phosphoserine. The segment covering 1871-1883 (VRSSPAPSENTHI) has biased composition (polar residues). The disordered stretch occupies residues 1871–1911 (VRSSPAPSENTHISPLKCTDNNQERKSPGVKNQGDKVNIQE). A phosphoserine mark is found at Ser-1884 and Ser-2033. 2 C2H2-type zinc fingers span residues 2088–2110 (YICE…IRTH) and 2116–2140 (YHCT…SKAH). 4 disordered regions span residues 2155 to 2228 (DEQD…PVST), 2265 to 2303 (SDYN…HQMS), 2327 to 2381 (SPSS…THLF), and 2572 to 2718 (PASQ…VIAT). The span at 2164–2175 (EKQRFSYERSGY) shows a compositional bias: basic and acidic residues. Over residues 2176–2198 (DLEESDGPDEDDNENEDDDEDSQ) the composition is skewed to acidic residues. Polar residues-rich tracts occupy residues 2199 to 2226 (AESV…QDPV) and 2288 to 2300 (TIPS…SPCH). A phosphoserine mark is found at Ser-2327 and Ser-2599. Residues 2573–2608 (ASQSKACETQPKQTSVASANQVSRTESPQGLPTVQR) show a composition bias toward polar residues. Over residues 2623-2637 (DHARLDGLSKMDTEK) the composition is skewed to basic and acidic residues. Residues 2651 to 2663 (TSIQGQPASTSQP) are compositionally biased toward polar residues. Ser-2669 and Ser-2682 each carry phosphoserine.

Interacts with UTP4.

The protein resides in the nucleus. It localises to the cytoplasm. This protein specifically binds to the DNA sequence 5'-GGGACTTTCC-3' which is found in the enhancer elements of numerous viral promoters such as those of SV40, CMV, or HIV-1. In addition, related sequences are found in the enhancer elements of a number of cellular promoters, including those of the class I MHC, interleukin-2 receptor, and interferon-beta genes. It may act in T-cell activation. Involved in activating HIV-1 gene expression. Isoform 2 and isoform 3 also bind to the IPCS (IRF1 and p53 common sequence) DNA sequence in the promoter region of interferon regulatory factor 1 and p53 genes and are involved in transcription regulation of these genes. Isoform 2 does not activate HIV-1 gene expression. Isoform 2 and isoform 3 may be involved in apoptosis. The sequence is that of Zinc finger protein 40 (HIVEP1) from Homo sapiens (Human).